Consider the following 159-residue polypeptide: MRIGQGFDVHAFCEGDSVILGGVTIPHSHGLMAHSDGDVLLHALADALLGAVALGDIGHFFPDSSEEWAGADSRDLLRRVMQRVLDEGYAVTNIDTTIIAQAPKMAPHIEAMRMNIAEDLGVPANRVSVKATTTEKLGFTGRGEGIACQAVCLLEAVSQ.

A divalent metal cation is bound by residues aspartate 8 and histidine 10. Residues 8-10 (DVH) and 34-35 (HS) contribute to the 4-CDP-2-C-methyl-D-erythritol 2-phosphate site. Histidine 42 lines the a divalent metal cation pocket. 4-CDP-2-C-methyl-D-erythritol 2-phosphate is bound by residues 56-58 (DIG), 100-106 (AQAPKMA), 132-135 (TTTE), phenylalanine 139, and arginine 142.

It belongs to the IspF family. In terms of assembly, homotrimer. A divalent metal cation is required as a cofactor.

It catalyses the reaction 4-CDP-2-C-methyl-D-erythritol 2-phosphate = 2-C-methyl-D-erythritol 2,4-cyclic diphosphate + CMP. Its pathway is isoprenoid biosynthesis; isopentenyl diphosphate biosynthesis via DXP pathway; isopentenyl diphosphate from 1-deoxy-D-xylulose 5-phosphate: step 4/6. Its function is as follows. Involved in the biosynthesis of isopentenyl diphosphate (IPP) and dimethylallyl diphosphate (DMAPP), two major building blocks of isoprenoid compounds. Catalyzes the conversion of 4-diphosphocytidyl-2-C-methyl-D-erythritol 2-phosphate (CDP-ME2P) to 2-C-methyl-D-erythritol 2,4-cyclodiphosphate (ME-CPP) with a corresponding release of cytidine 5-monophosphate (CMP). The chain is 2-C-methyl-D-erythritol 2,4-cyclodiphosphate synthase from Marinobacter nauticus (strain ATCC 700491 / DSM 11845 / VT8) (Marinobacter aquaeolei).